Reading from the N-terminus, the 392-residue chain is MSLAHTAAEYMLSDALLPDRRGPRLKGLRLELPLDRIVKFVAVGSPLLLMSLAFAQEFSSGSPISCFSPSNFSIRQAAYVDSSCWDSLLHHKQDGPGQDKMKSLWPHKALPYSLLALALLMYLPVLLWQYAAVPALSSDLLFIISELDKSYNRSIRLVQHMLKIRQKSSDPYVFWNELEKARKERYFEFPLLERYLACKQRSHSLVATYLLRNSLLLIFTSATYLYLGHFHLDVFFQEEFSCSIKTGLLSDETHVPNLITCRLTSLSIFQIVSLSSVAIYTILVPVIIYNLTRLCRWDKRLLSVYEMLPAFDLLSRKMLGCPINDLNVILLFLRANISELISFSWLSVLCVLKDTTTQKHNIDTVVDFMTLLAGLEPSKPKHLTNSACDEHP.

The Cytoplasmic segment spans residues 1-39 (MSLAHTAAEYMLSDALLPDRRGPRLKGLRLELPLDRIVK). A helical transmembrane segment spans residues 40–60 (FVAVGSPLLLMSLAFAQEFSS). Residues 61-113 (GSPISCFSPSNFSIRQAAYVDSSCWDSLLHHKQDGPGQDKMKSLWPHKALPYS) lie on the Extracellular side of the membrane. Asparagine 71 carries N-linked (GlcNAc...) asparagine glycosylation. Residues 114 to 134 (LLALALLMYLPVLLWQYAAVP) traverse the membrane as a helical segment. The Cytoplasmic segment spans residues 135 to 215 (ALSSDLLFII…VATYLLRNSL (81 aa)). Residues 216–236 (LLIFTSATYLYLGHFHLDVFF) form a helical membrane-spanning segment. Residues 237–267 (QEEFSCSIKTGLLSDETHVPNLITCRLTSLS) lie on the Extracellular side of the membrane. Residues 268-288 (IFQIVSLSSVAIYTILVPVII) traverse the membrane as a helical segment. The Cytoplasmic segment spans residues 289–392 (YNLTRLCRWD…LTNSACDEHP (104 aa)).

The protein belongs to the pannexin family. As to quaternary structure, homoheptameric.

The protein resides in the cell membrane. The protein localises to the cell junction. It localises to the gap junction. It is found in the endoplasmic reticulum membrane. It catalyses the reaction Ca(2+)(in) = Ca(2+)(out). The enzyme catalyses ATP(in) = ATP(out). Functionally, regulator of osteoblast differentiation by functionning as a Ca(2+) channel in the endoplasmic reticulum which regulates calmodulin (CaM) pathways. Allows ATP release into the extracellular space and activation or purinergic receptors. In Homo sapiens (Human), this protein is Pannexin-3.